A 470-amino-acid chain; its full sequence is Dihydrolipoyl dehydrogenase (470 aa).

FAD is bound by residues 39–47 (EKATLGGVC), Lys-56, and Ala-119. A disulfide bridge connects residues Cys-47 and Cys-52. NAD(+) contacts are provided by residues 183–187 (GGGYI), Glu-206, and 272–275 (TVGR). FAD-binding residues include Asp-315 and Ala-323. Catalysis depends on His-447, which acts as the Proton acceptor.

This sequence belongs to the class-I pyridine nucleotide-disulfide oxidoreductase family. Homodimer. Component of two multienzyme complexes: pyruvate dehydrogenase complex and oxoglutarate dehydrogenase complex. FAD is required as a cofactor.

It is found in the cytoplasm. The enzyme catalyses N(6)-[(R)-dihydrolipoyl]-L-lysyl-[protein] + NAD(+) = N(6)-[(R)-lipoyl]-L-lysyl-[protein] + NADH + H(+). In terms of biological role, catalyzes the oxidation of dihydrolipoamide to lipoamide. In Bacillus subtilis (strain 168), this protein is Dihydrolipoyl dehydrogenase (pdhD).